The sequence spans 206 residues: Cytochrome b-245 chaperone 1 homolog (206 aa).

The chain crosses the membrane as a helical span at residues 21–43 (GIRSWSILVGIASVGLAAAYYSS). Residues 172 to 206 (ADDDYPDDDDGIEDLGLGDSSDSQDDPDGDDDEEH) form a disordered region. Composition is skewed to acidic residues over residues 174 to 184 (DDYPDDDDGIE) and 193 to 206 (DSQDDPDGDDDEEH).

This sequence belongs to the CYBC1 family.

The protein resides in the endoplasmic reticulum membrane. Functionally, functions as a chaperone necessary for a stable expression of the CYBA and CYBB subunits of the cytochrome b-245 heterodimer. This is Cytochrome b-245 chaperone 1 homolog from Danio rerio (Zebrafish).